The primary structure comprises 402 residues: S-adenosylmethionine synthase (402 aa).

His-16 lines the ATP pocket. Residue Asp-18 coordinates Mg(2+). Glu-44 serves as a coordination point for K(+). Glu-57 and Gln-103 together coordinate L-methionine. Residues 103–113 (QSPDIAQGVDT) form a flexible loop region. ATP-binding positions include 178-180 (DGK), 249-250 (KF), Asp-258, 264-265 (RK), Ala-281, and Lys-285. Asp-258 is a binding site for L-methionine. Lys-289 contributes to the L-methionine binding site.

The protein belongs to the AdoMet synthase family. In terms of assembly, homotetramer; dimer of dimers. It depends on Mg(2+) as a cofactor. K(+) is required as a cofactor.

Its subcellular location is the cytoplasm. The catalysed reaction is L-methionine + ATP + H2O = S-adenosyl-L-methionine + phosphate + diphosphate. The protein operates within amino-acid biosynthesis; S-adenosyl-L-methionine biosynthesis; S-adenosyl-L-methionine from L-methionine: step 1/1. Functionally, catalyzes the formation of S-adenosylmethionine (AdoMet) from methionine and ATP. The overall synthetic reaction is composed of two sequential steps, AdoMet formation and the subsequent tripolyphosphate hydrolysis which occurs prior to release of AdoMet from the enzyme. The chain is S-adenosylmethionine synthase from Mycolicibacterium vanbaalenii (strain DSM 7251 / JCM 13017 / BCRC 16820 / KCTC 9966 / NRRL B-24157 / PYR-1) (Mycobacterium vanbaalenii).